Here is a 337-residue protein sequence, read N- to C-terminus: tRNA(Ile)-lysidine synthase (337 aa).

40-45 (SGGQDS) serves as a coordination point for ATP.

This sequence belongs to the tRNA(Ile)-lysidine synthase family.

The protein localises to the cytoplasm. The enzyme catalyses cytidine(34) in tRNA(Ile2) + L-lysine + ATP = lysidine(34) in tRNA(Ile2) + AMP + diphosphate + H(+). Functionally, ligates lysine onto the cytidine present at position 34 of the AUA codon-specific tRNA(Ile) that contains the anticodon CAU, in an ATP-dependent manner. Cytidine is converted to lysidine, thus changing the amino acid specificity of the tRNA from methionine to isoleucine. This chain is tRNA(Ile)-lysidine synthase, found in Parasynechococcus marenigrum (strain WH8102).